A 160-amino-acid polypeptide reads, in one-letter code: Thioredoxin-like protein 4A homolog (160 aa).

The segment at 132-160 is disordered; sequence KFLKKKKKKKNKKKQKKKIKKIKKKIKNN. Residues 133–160 show a composition bias toward basic residues; sequence FLKKKKKKKNKKKQKKKIKKIKKKIKNN.

The protein belongs to the DIM1 family. In terms of assembly, component of the precatalytic spliceosome (spliceosome B complex). Component of the U5 snRNP complex. Component of the U4/U6-U5 tri-snRNP complex.

The protein localises to the nucleus. Its function is as follows. Plays a role in pre-mRNA splicing as component of the U5 snRNP and U4/U6-U5 tri-snRNP complexes that are involved in spliceosome assembly, and as component of the precatalytic spliceosome (spliceosome B complex). The protein is Thioredoxin-like protein 4A homolog (txnl4a) of Dictyostelium discoideum (Social amoeba).